A 185-amino-acid chain; its full sequence is Ribosome-recycling factor (185 aa).

The protein belongs to the RRF family.

The protein localises to the cytoplasm. Responsible for the release of ribosomes from messenger RNA at the termination of protein biosynthesis. May increase the efficiency of translation by recycling ribosomes from one round of translation to another. This chain is Ribosome-recycling factor, found in Pseudomonas fluorescens (strain Pf0-1).